We begin with the raw amino-acid sequence, 417 residues long: Serine protease hepsin (417 aa).

Over 1 to 23 (MAQKEGGRTVPCCSRPKVAALTA) the chain is Cytoplasmic. Residues 24 to 44 (GTLLLLTAIGAASWAIVAVLL) traverse the membrane as a helical; Signal-anchor for type II membrane protein segment. Residues 45-417 (RSDQEPLYPV…SEASGMVTQL (373 aa)) lie on the Extracellular side of the membrane. Residues 54–151 (VQVSSADARL…RGRFLAAICQ (98 aa)) enclose the SRCR domain. 8 cysteine pairs are disulfide-bonded: Cys77/Cys140, Cys90/Cys150, Cys119/Cys138, Cys153/Cys277, Cys188/Cys204, Cys291/Cys359, Cys322/Cys338, and Cys349/Cys381. Asn112 carries an N-linked (GlcNAc...) asparagine glycan. One can recognise a Peptidase S1 domain in the interval 163–405 (IVGGRDTSLG…FREWIFQAIK (243 aa)). Residues His203 and Asp257 each act as charge relay system in the active site. Ser353 serves as the catalytic Charge relay system.

The protein belongs to the peptidase S1 family. In terms of tissue distribution, detected in liver and kidney.

The protein resides in the cell membrane. The protein localises to the apical cell membrane. The enzyme catalyses Cleavage after basic amino-acid residues, with Arg strongly preferred to Lys.. Its function is as follows. Serine protease that cleaves extracellular substrates, and contributes to the proteolytic processing of growth factors, such as HGF and MST1/HGFL. Plays a role in cell growth and maintenance of cell morphology. Plays a role in the proteolytic processing of ACE2. Mediates the proteolytic cleavage of urinary UMOD that is required for UMOD polymerization. The chain is Serine protease hepsin (HPN) from Homo sapiens (Human).